A 430-amino-acid chain; its full sequence is Adenylosuccinate synthetase (430 aa).

GTP contacts are provided by residues 12–18 (GDEGKGK) and 40–42 (GHT). The active-site Proton acceptor is D13. 2 residues coordinate Mg(2+): D13 and G40. IMP contacts are provided by residues 13-16 (DEGK), 38-41 (NAGH), T129, R143, Q224, T239, and R303. H41 serves as the catalytic Proton donor. Residue 299-305 (TVSNRKR) participates in substrate binding. GTP contacts are provided by residues R305, 331-333 (KLD), and 413-415 (STG).

Belongs to the adenylosuccinate synthetase family. In terms of assembly, homodimer. The cofactor is Mg(2+).

The protein resides in the cytoplasm. It carries out the reaction IMP + L-aspartate + GTP = N(6)-(1,2-dicarboxyethyl)-AMP + GDP + phosphate + 2 H(+). Its pathway is purine metabolism; AMP biosynthesis via de novo pathway; AMP from IMP: step 1/2. In terms of biological role, plays an important role in the de novo pathway of purine nucleotide biosynthesis. Catalyzes the first committed step in the biosynthesis of AMP from IMP. The sequence is that of Adenylosuccinate synthetase from Ehrlichia chaffeensis (strain ATCC CRL-10679 / Arkansas).